Reading from the N-terminus, the 116-residue chain is Nucleoid-associated protein P9215_00191 (116 aa).

It belongs to the YbaB/EbfC family. As to quaternary structure, homodimer.

Its subcellular location is the cytoplasm. It is found in the nucleoid. Functionally, binds to DNA and alters its conformation. May be involved in regulation of gene expression, nucleoid organization and DNA protection. This Prochlorococcus marinus (strain MIT 9215) protein is Nucleoid-associated protein P9215_00191.